The following is a 210-amino-acid chain: Probable GTP-binding protein EngB (210 aa).

The 176-residue stretch at 24–199 (QGCEVAFAGR…WEVLGRWLDL (176 aa)) folds into the EngB-type G domain. GTP-binding positions include 32–39 (GRSNAGKS), 59–63 (GRTRM), 77–80 (DLPG), 144–147 (TKSD), and 178–180 (FSS). Mg(2+) is bound by residues serine 39 and threonine 61.

This sequence belongs to the TRAFAC class TrmE-Era-EngA-EngB-Septin-like GTPase superfamily. EngB GTPase family. It depends on Mg(2+) as a cofactor.

Necessary for normal cell division and for the maintenance of normal septation. The polypeptide is Probable GTP-binding protein EngB (Methylococcus capsulatus (strain ATCC 33009 / NCIMB 11132 / Bath)).